We begin with the raw amino-acid sequence, 73 residues long: Translation initiation factor IF-1 (73 aa).

The region spanning 1–73 is the S1-like domain; sequence MANKEELIEF…SKGRITYRAR (73 aa).

The protein belongs to the IF-1 family. As to quaternary structure, component of the 30S ribosomal translation pre-initiation complex which assembles on the 30S ribosome in the order IF-2 and IF-3, IF-1 and N-formylmethionyl-tRNA(fMet); mRNA recruitment can occur at any time during PIC assembly.

Its subcellular location is the cytoplasm. Its function is as follows. One of the essential components for the initiation of protein synthesis. Stabilizes the binding of IF-2 and IF-3 on the 30S subunit to which N-formylmethionyl-tRNA(fMet) subsequently binds. Helps modulate mRNA selection, yielding the 30S pre-initiation complex (PIC). Upon addition of the 50S ribosomal subunit IF-1, IF-2 and IF-3 are released leaving the mature 70S translation initiation complex. This chain is Translation initiation factor IF-1, found in Acinetobacter baylyi (strain ATCC 33305 / BD413 / ADP1).